We begin with the raw amino-acid sequence, 299 residues long: HTH-type transcriptional regulator PgrR (299 aa).

The region spanning 4 to 61 is the HTH lysR-type domain; sequence EEIADLMAFVVVAEERSFTRAAARLSMAQSALSQIVRRIEERLGLRLLTRTTRSVVPT. The segment at residues 21 to 40 is a DNA-binding region (H-T-H motif); the sequence is FTRAAARLSMAQSALSQIVR.

Belongs to the LysR transcriptional regulatory family.

In terms of biological role, regulates the expression of genes involved in peptidoglycan (PG) degradation. Could play a role in switch control between recycling and degradation of PG peptides. Negatively regulates the expression of the ycjY-ymjD-ymjC-mpaA operon by binding to the PgrR-box. In addition, other genes are predicted to be under the control of PgrR, including genes related to membrane formation and function. The chain is HTH-type transcriptional regulator PgrR (pgrR) from Escherichia coli (strain K12).